The sequence spans 387 residues: ADP,ATP carrier protein 2, mitochondrial (387 aa).

Residues 1–77 constitute a mitochondrion transit peptide; it reads MADQANQPTV…PVMPTPLFAN (77 aa). 3 Solcar repeats span residues 85-178, 190-282, and 290-376; these read KNFM…FKRL, KWFA…IKPV, and DNFF…LQIL. The next 5 helical transmembrane spans lie at 87-114, 155-179, 188-208, 258-279, and 293-313; these read FMID…VKLL, TANV…KRLF, YWKW…SSLF, FNIS…YDSI, and FASF…SYPI. Residues Arg-160 and Lys-172 each contribute to the ADP site. Arg-317 is an ADP binding site. The tract at residues 317 to 322 is important for transport activity; sequence RRRMMM. The Nucleotide carrier signature motif motif lies at 317-322; sequence RRRMMM. Residues 353–373 traverse the membrane as a helical segment; it reads AGANILRAIAGAGVLSGYDQL.

Belongs to the mitochondrial carrier (TC 2.A.29) family. Monomer.

Its subcellular location is the mitochondrion inner membrane. The enzyme catalyses ADP(in) + ATP(out) = ADP(out) + ATP(in). With respect to regulation, the matrix-open state (m-state) is inhibited by the membrane-permeable bongkrekic acid (BKA). The cytoplasmic-open state (c-state) is inhibited by the membrane-impermeable toxic inhibitor carboxyatractyloside (CATR). Functionally, ADP:ATP antiporter that mediates import of ADP into the mitochondrial matrix for ATP synthesis, and export of ATP out to fuel the cell. Cycles between the cytoplasmic-open state (c-state) and the matrix-open state (m-state): operates by the alternating access mechanism with a single substrate-binding site intermittently exposed to either the cytosolic (c-state) or matrix (m-state) side of the inner mitochondrial membrane. The sequence is that of ADP,ATP carrier protein 2, mitochondrial (ANT2) from Zea mays (Maize).